The sequence spans 246 residues: MATNTFKQQVDSIIQSRHLLQHPFYIAWTEGKLTREQLRHYAEQYFYNVLAEPTYLSAVHFNTPHFHNVENSGDISIRQEVLKNLIDEEHGEKNHPALWKAFAFALGADDASLTQADALPETENLVATFRDICINEPFYAGLAALHAFESQVPDIAAVKIDGLAKFYGMKDPDSYEFFSVHQTADIFHSQAEWAIIEKFADTPEKQAEVLAATRRACDALWKFLDGIHENYCANLICEEKTAATLH.

Residues glutamate 88, histidine 95, glutamate 149, histidine 181, aspartate 185, and histidine 188 each coordinate Fe(2+).

It belongs to the CADD family. Homodimer. The cofactor is Fe(2+). Requires Mn(2+) as cofactor.

Involved in de novo para-aminobenzoate (PABA) biosynthesis. Acts as a self-sacrificing or 'suicide' enzyme that utilizes its own active site tyrosine residue(s) as the substrate for PABA synthesis. The side chain of the tyrosine residue is released from the protein backbone via cleavage of the C(alpha)-C(beta) bond, leaving a glycine in place of the original tyrosine residue. Reaction requires O(2) and a reduced dimetal cofactor. This chain is 4-aminobenzoate synthase, found in Nitrosomonas europaea (strain ATCC 19718 / CIP 103999 / KCTC 2705 / NBRC 14298).